A 238-amino-acid chain; its full sequence is Opacity protein opA68 (238 aa).

A1 is a signal peptide. A disordered region spans residues 88–109; sequence NLQRRTSNGNRRDRKTENQENG.

The protein belongs to the opacity porin family.

The protein resides in the cell outer membrane. In terms of biological role, implicated in a number of adherence functions. OPA proteins are implicated in pathogenesis and are subject to phase variation. The sequence is that of Opacity protein opA68 from Neisseria gonorrhoeae.